Consider the following 317-residue polypeptide: Probable methyltransferase tdiE (317 aa).

This sequence belongs to the methyltransferase superfamily. LaeA methyltransferase family.

The protein operates within secondary metabolite biosynthesis. Functionally, probable methyltransferase; part of the gene cluster that mediates the biosynthesis of terrequinone A, an antitumor agent. The first step in the biosynthetic pathway for terrequinone A is formation of indole pyruvic acid (IPA) from L-tryptophan by the aminotransferase tdiD. The nonribosomal peptide synthase tdiA then immediately converts unstable IPA to didemethylasterriquinone D (DDAQ D), via condensation of 2 IPA molecules. The symmetric connectivity of the 2 IPA molecules is thought to arise by head-to-tail dual Claisen condensations facilitated by the TE domain. TdiB then catalyzes reverse prenylation by transferring dimethylallyl diphosphate to carbon atom 2' of DDAQ D, to yield asterriquinone C-1. Finally, tdiC and tdiE enzymes robustly convert asterriquinone C-1 to terrequinone A via a transformation involving regular prenylation at carbon atom 5, which requires elimination of the hydroxy group on C-5. This Emericella nidulans (strain FGSC A4 / ATCC 38163 / CBS 112.46 / NRRL 194 / M139) (Aspergillus nidulans) protein is Probable methyltransferase tdiE.